A 754-amino-acid polypeptide reads, in one-letter code: tRNA(Met) cytidine acetyltransferase TmcA (754 aa).

The tract at residues 181–202 (GISFDAAPPRVPTEKDRRSPRR) is disordered. Residues 192 to 202 (PTEKDRRSPRR) show a composition bias toward basic and acidic residues. ATP is bound by residues Q212, 236–245 (GRGKSSAAGL), and R383. Positions 418 to 603 (VSYRALSPDD…YSALMTRPLS (186 aa)) constitute an N-acetyltransferase domain. Acetyl-CoA is bound by residues 529-531 (IAT), 536-542 (RSSGLGS), and E568.

The protein belongs to the RNA cytidine acetyltransferase family. TmcA subfamily.

Its subcellular location is the cytoplasm. The catalysed reaction is cytidine(34) in elongator tRNA(Met) + acetyl-CoA + ATP + H2O = N(4)-acetylcytidine(34) in elongator tRNA(Met) + ADP + phosphate + CoA + H(+). In terms of biological role, catalyzes the formation of N(4)-acetylcytidine (ac(4)C) at the wobble position of tRNA(Met), by using acetyl-CoA as an acetyl donor and ATP (or GTP). The protein is tRNA(Met) cytidine acetyltransferase TmcA of Haloferax volcanii (strain ATCC 29605 / DSM 3757 / JCM 8879 / NBRC 14742 / NCIMB 2012 / VKM B-1768 / DS2) (Halobacterium volcanii).